We begin with the raw amino-acid sequence, 101 residues long: Large ribosomal subunit protein bL21 (101 aa).

Belongs to the bacterial ribosomal protein bL21 family. Part of the 50S ribosomal subunit. Contacts protein L20.

This protein binds to 23S rRNA in the presence of protein L20. In Corynebacterium aurimucosum (strain ATCC 700975 / DSM 44827 / CIP 107346 / CN-1) (Corynebacterium nigricans), this protein is Large ribosomal subunit protein bL21.